The primary structure comprises 591 residues: MCMDRLVESYPTGDPGDACRILGPIAIMQADLEEISEFGLQTSIFGRPTPISRLHHTVSSLHHFESGHWVSTYKSRPAAFFFTSGDFHSDQFNKAIAGRRDFVRSCRRGHAERNYSGFSLADGTIIWTLKYVPLAASRCLIFLRVIRMQKFSDQVKEMPRRERRVLETLLYALPFLLAQNLVPAILILKTKKNAVLRYLWIFWSVFVFYQWLQIPISHGESGTYVAKVGVQLFIVILQGFNLVLINPLDRDELLQTKVTGPRDDLLRQVYKVARLFTYLRGVRTPWQVKGIPSHPAYLELQPKTPISRSAFLVRQAAIVAWLYLYLNCANSLADRNSSPLSKPIYGLGYLRVSREEWRTRIMTSLMFWFAFLRAAVDIDYRTASILSVGVGLDAPEDWPPLFGRANQAYTLRNFWGTYWHQMFRWPFTATSNYLARELMALPRPSLLERYTNIFFVFLVSGVMHVMSDLLMGISMSQSASILFFCSMAVGVMIEDAVQAAWTRVSDSHRPGGASTVDSDGYAVPCWHKLVGFIWVCVWLSLTTPAWLCPLQMSKEKSLFLVNIPELVGTRKAIAITVGGGLLVKYTFRGEL.

N114 carries an N-linked (GlcNAc...) asparagine glycan. 9 helical membrane-spanning segments follow: residues 123 to 143 (GTII…LIFL), 168 to 188 (TLLY…ILIL), 199 to 219 (LWIF…ISHG), 228 to 248 (VGVQ…INPL), 309 to 329 (SAFL…LNCA), 383 to 403 (ASIL…PLFG), 453 to 473 (IFFV…LMGI), 481 to 501 (ILFF…QAAW), and 529 to 549 (LVGF…WLCP).

Belongs to the wax synthase family.

The protein resides in the membrane. The catalysed reaction is sartorypyrone F + acetyl-CoA = sartorypyrone G + CoA. It catalyses the reaction sartorypyrone D + acetyl-CoA = sartorypyrone A + CoA. It participates in secondary metabolite biosynthesis; terpenoid biosynthesis. In terms of biological role, acetyltransferase; part of the gene cluster that mediates the biosynthesis of meroterpenoids called sartorypyrones. SpyB catalyzes the last step of the pathway and is responsible for the acetylation of sartorypyrones D and F to produce sartorypyrones A and G, respectively. The biosynthesis of sartorypyrones begins with the production of triacetic acid lactone (TAL) by the NR-PKS spyA using one molecule of acetyl-CoA and two molecules of malonyl-CoA. The prenyltransferase spyF then conjugates geranylgeranyl pyrophosphate (GGPP) to TAL to form geranylgeranyl-triacetate lactone, for which the pathway-specific geranylgeranyl pyrophosphate synthase (GGPS) spyE is required to provide GGPP. Subsequently, geranylgeranyl-triacetate lactone is epoxidized at the terminal olein by the FAD-dependent monooxygenase spyC, followed by cyclization of the terpenoid component catalyzed by the terpene cyclase spyD to produce both the bicyclic sartorypyrone F and the monocyclic sartorypyrone D. Finally, the last step of the biosynthesis involves the acetylation of the meroterpenoids sartorypyrones D and F by the acetyltransferase SpyB to produce sartorypyrones A and G, respectively. The sequence is that of Acetyltransferase spyB from Aspergillus fumigatus (strain ATCC MYA-4609 / CBS 101355 / FGSC A1100 / Af293) (Neosartorya fumigata).